A 293-amino-acid chain; its full sequence is Xyloglucan endotransglucosylase/hydrolase protein 31 (293 aa).

The first 20 residues, 1–20 (MALSLIFLALLVLCPSSGHS), serve as a signal peptide directing secretion. The GH16 domain occupies 29–230 (YPSSRVPTSP…YRYQPFVAKY (202 aa)). Glu114 (nucleophile) is an active-site residue. Glu118 functions as the Proton donor in the catalytic mechanism. Xyloglucan is bound by residues Glu118, 131 to 133 (QTN), 141 to 148 (DRNVIGRE), and 209 to 210 (DW). 2 cysteine pairs are disulfide-bonded: Cys238–Cys246 and Cys280–Cys293. A xyloglucan-binding site is contributed by Arg285.

This sequence belongs to the glycosyl hydrolase 16 family. XTH group 3 subfamily. As to quaternary structure, interacts with XTH17. The formation of an XTH17-XTH31 dimer may be required for XET activity. Post-translationally, contains at least one intrachain disulfide bond essential for its enzymatic activity. As to expression, predominantly expressed in root. Weakly expressed in influorescence stems. Expressed in root tips and elongation zones, stems, young leaves, flowers and siliques. Expressed in root, hypocotyl, and etiolated whole seedlings.

It is found in the secreted. Its subcellular location is the cell wall. The protein localises to the extracellular space. The protein resides in the apoplast. It localises to the cell membrane. The catalysed reaction is breaks a beta-(1-&gt;4) bond in the backbone of a xyloglucan and transfers the xyloglucanyl segment on to O-4 of the non-reducing terminal glucose residue of an acceptor, which can be a xyloglucan or an oligosaccharide of xyloglucan.. The enzyme catalyses xyloglucan + H2O = xyloglucan oligosaccharides.. Its function is as follows. Catalyzes xyloglucan endohydrolysis (XEH) and/or endotransglycosylation (XET). Cleaves and religates xyloglucan polymers, an essential constituent of the primary cell wall, and thereby participates in cell wall construction of growing tissues. Involved in the accumulation of hemicelluloses. Has a high XEH activity and only a slight XET activity in vitro, but the main in planta activity seems to be XET, thus controlling aluminum sensitivity. Acceptor preferences are XXXGol = XXFGol &gt; XXLGol &gt; XLLGol = XLFGol. The chain is Xyloglucan endotransglucosylase/hydrolase protein 31 from Arabidopsis thaliana (Mouse-ear cress).